Here is an 873-residue protein sequence, read N- to C-terminus: V-type proton ATPase 116 kDa subunit a 2 (873 aa).

Residues 1-407 lie on the Cytoplasmic side of the membrane; sequence MGSLSRSEEM…TIITFPFLFS (407 aa). Residues 408-428 traverse the membrane as a helical segment; it reads CMFGDLGHGCIMLMAGLWFVL. The Lumenal segment spans residues 429–445; that stretch reads REKNLQARNIKDEIFNM. The helical transmembrane segment at 446–466 threads the bilayer; sequence FFGGRYIILLMGLFSIHAGII. At 467–543 the chain is on the cytoplasmic side; that stretch reads YNDMFAKSFN…NKLNFLNSMK (77 aa). A helical membrane pass occupies residues 544-564; that stretch reads MKLSVILGISQMTFGVILSFF. N-linked (GlcNAc...) asparagine glycans are attached at residues asparagine 565 and asparagine 569. The Lumenal segment spans residues 565–574; sequence NHTYNKSKID. Residues 575–595 traverse the membrane as a helical segment; the sequence is IFTVFIPQMLFMGCIFMYLCL. The Cytoplasmic portion of the chain corresponds to 596 to 614; it reads QIILKWLFFWTKEATVFGQ. The chain crosses the membrane as a helical span at residues 615 to 635; the sequence is IYPGSHCAPSLLIGLINMFMM. The Lumenal segment spans residues 636–668; the sequence is KDRNAGFVVDGGKVNGEYREVETCYLSQWYPGQ. Residues 669-689 form a helical membrane-spanning segment; the sequence is SVIEMILVVIAVICVPVMLFG. The Cytoplasmic segment spans residues 690 to 785; sequence KPIHHVMQQK…LWALSLAHAQ (96 aa). A helical membrane pass occupies residues 786-806; it reads LSEVLWHMVFVTGGLGISGTA. Position 807 (glycine 807) is a topological domain, lumenal. The chain crosses the membrane as a helical span at residues 808–828; it reads FIAVYVVFFIFFVLTISILVL. The Cytoplasmic segment spans residues 829–873; that stretch reads MEGLSAFLHTLRLHWVEFQSKFYLGLGYPFVPYSFKTALQEAEAA.

Belongs to the V-ATPase 116 kDa subunit family. In terms of assembly, V-ATPase is a heteromultimeric enzyme made up of two complexes: the ATP-hydrolytic V1 complex and the proton translocation V0 complex. The V1 complex consists of three catalytic AB heterodimers that form a heterohexamer, three peripheral stalks each consisting of EG heterodimers, one central rotor including subunits D and F, and the regulatory subunits C and H. The proton translocation complex V0 consists of the proton transport subunit a, a ring of proteolipid subunits c9c'', rotary subunit d, subunits e and f, and the accessory subunits vah-19/Ac45 and vah-20/PRR. Interacts with V-type proton ATPase subunit C vha-11. Expressed in the H-shaped excretory cell (at protein level). Expressed in hypodermal cells around the vulva. Expressed in the main epidermal syncytium. Expressed in the sheath cells associated with head and tail sensory organs; specifically, expressed in the apical sheath cells of the amphids and CEP neuron and in the sheath cells of the OLQ sensory organ.

Its subcellular location is the apical cell membrane. The protein resides in the endosome. It localises to the multivesicular body membrane. Functionally, subunit of the V0 complex of vacuolar(H+)-ATPase (V-ATPase), a multisubunit enzyme composed of a peripheral complex (V1) that hydrolyzes ATP and a membrane integral complex (V0) that translocates protons. V-ATPase is responsible for acidifying and maintaining the pH of intracellular compartments and in some cell types, is targeted to the plasma membrane, where it is responsible for acidifying the extracellular environment. Involved in the assembly of the V-ATPase complex. The V-ATPase is required for the function of the excretory canal. Independently of the V1 complex, the V0 complex of the V-ATPase is required for multivesicular body membrane fusion with the apical membrane of the epidermal cells during exosome release and thus regulates the release of cuticle components such as Hedgehog-related peptide wrt-2 but not collagen. Also, in the epidermis, regulates the trafficking of che-14 and rdy-2. Regulates the secretion of granular material found in the amphid channel and in controlling osmoregulation in the amphid pocket. The chain is V-type proton ATPase 116 kDa subunit a 2 from Caenorhabditis elegans.